The primary structure comprises 365 residues: Putrescine 2-hydroxylase (365 aa).

Residues 44–141 (GHELMVPEVG…LQNWNGLLFE (98 aa)) form the Rieske domain. Cys-81, His-83, Cys-100, and His-103 together coordinate [2Fe-2S] cluster.

The protein belongs to the bacterial ring-hydroxylating dioxygenase alpha subunit family. [2Fe-2S] cluster is required as a cofactor.

Its function is as follows. Rieske-type iron sulfur protein that can catalyze in vitro the 2-hydroxylation of putrescine, forming 2-hydroxyputrescine. May be involved in the biosynthesis of the cyclic hydroxamate siderophore alcaligin. In Ralstonia nicotianae (strain ATCC BAA-1114 / GMI1000) (Ralstonia solanacearum), this protein is Putrescine 2-hydroxylase.